We begin with the raw amino-acid sequence, 111 residues long: Large ribosomal subunit protein uL24 (111 aa).

Basic and acidic residues predominate over residues 48-65 (EKPSRSNREGGRTEREAP). A disordered region spans residues 48–111 (EKPSRSNREG…AKTTGEELDD (64 aa)). A compositionally biased stretch (polar residues) spans 69-80 (SNVNPIDSNGES). Over residues 86–95 (KKVEDPDTGR) the composition is skewed to basic and acidic residues.

It belongs to the universal ribosomal protein uL24 family. In terms of assembly, part of the 50S ribosomal subunit.

Its function is as follows. One of two assembly initiator proteins, it binds directly to the 5'-end of the 23S rRNA, where it nucleates assembly of the 50S subunit. Functionally, one of the proteins that surrounds the polypeptide exit tunnel on the outside of the subunit. The chain is Large ribosomal subunit protein uL24 from Salinibacter ruber (strain DSM 13855 / M31).